Reading from the N-terminus, the 700-residue chain is Elongation factor G (700 aa).

One can recognise a tr-type G domain in the interval 10 to 286 (TKVRNIGIMA…AVIDYLPNPL (277 aa)). GTP-binding positions include 19–26 (AHIDAGKT), 83–87 (DTPGH), and 137–140 (NKMD).

It belongs to the TRAFAC class translation factor GTPase superfamily. Classic translation factor GTPase family. EF-G/EF-2 subfamily.

The protein localises to the cytoplasm. Functionally, catalyzes the GTP-dependent ribosomal translocation step during translation elongation. During this step, the ribosome changes from the pre-translocational (PRE) to the post-translocational (POST) state as the newly formed A-site-bound peptidyl-tRNA and P-site-bound deacylated tRNA move to the P and E sites, respectively. Catalyzes the coordinated movement of the two tRNA molecules, the mRNA and conformational changes in the ribosome. The protein is Elongation factor G of Mycolicibacterium vanbaalenii (strain DSM 7251 / JCM 13017 / BCRC 16820 / KCTC 9966 / NRRL B-24157 / PYR-1) (Mycobacterium vanbaalenii).